A 755-amino-acid chain; its full sequence is Cellulose synthase-like protein B3 (755 aa).

2 consecutive transmembrane segments (helical) span residues 24 to 44 (VVDL…ILLM) and 51 to 71 (WVVA…ITSI). Residues aspartate 136 and aspartate 461 contribute to the active site. The next 6 helical transmembrane spans lie at 534 to 556 (YLYI…LPAY), 569 to 589 (VYLG…LWEF), 615 to 635 (LFSI…VFIV), 674 to 694 (FLPG…CSVG), 702 to 722 (GSGL…LPFL), and 733 to 753 (IPWS…VFSV).

It belongs to the glycosyltransferase 2 family. Plant cellulose synthase-like B subfamily. In terms of tissue distribution, expressed in young seedlings, primarily in the vascular tissue.

Its subcellular location is the golgi apparatus membrane. Its function is as follows. Thought to be a Golgi-localized beta-glycan synthase that polymerize the backbones of noncellulosic polysaccharides (hemicelluloses) of plant cell wall. The protein is Cellulose synthase-like protein B3 (CSLB3) of Arabidopsis thaliana (Mouse-ear cress).